Reading from the N-terminus, the 916-residue chain is Major intrinsically disordered Notch2-binding receptor 1 (916 aa).

Residues 1-891 (METSQETSLF…AEFRRAKVCK (891 aa)) are Cytoplasmic-facing. Disordered stretches follow at residues 390–409 (EEKL…PAPE), 553–591 (KSDC…SEEE), 648–675 (SLTS…GPKL), 705–726 (TRPS…IASI), and 745–782 (NEEE…LPKQ). 2 stretches are compositionally biased toward basic and acidic residues: residues 553–564 (KSDCDSSPEHNL) and 575–591 (KGDK…SEEE). Residue S711 is modified to Phosphoserine. The span at 750–771 (KDTGPGDNKDWHRKSKEADRQY) shows a compositional bias: basic and acidic residues. Residues 892–912 (IAALIAAAACTVILVIVVPIC) traverse the membrane as a helical segment. Residues 913 to 916 (TMKS) lie on the Extracellular side of the membrane.

This sequence belongs to the MINAR family. Interacts with NOTCH2; this interaction increases MINAR1 stability. Interacts (via N-terminus) with DEPTOR (via PDZ domain); this interaction may stabilize DEPTOR protein by impairing its ubiquitination. In terms of tissue distribution, widely expressed, including in breast epithelial cells and endothelial cells (at protein level). Expression is down-regulated in advanced breast tumors (at protein level).

It localises to the cell membrane. In terms of biological role, intrinsically disordered protein which may negatively regulate mTOR signaling pathway by stabilizing the mTOR complex component DEPTOR. Negatively regulates angiogenesis. Negatively regulates cell growth. Negatively regulates neurite outgrowth in hippocampal neurons. This chain is Major intrinsically disordered Notch2-binding receptor 1, found in Homo sapiens (Human).